A 545-amino-acid chain; its full sequence is uncharacterized protein (545 aa).

Basic residues predominate over residues Met-1–Arg-10. The disordered stretch occupies residues Met-1–Pro-25. WD repeat units lie at residues Ala-417 to Met-456 and Gly-460 to Ser-501.

This is an uncharacterized protein from Caenorhabditis elegans.